The sequence spans 185 residues: Photosystem I assembly protein Ycf4 (185 aa).

Helical transmembrane passes span 24–44 and 58–78; these read YIIG…SISS and ALLF…ANLL.

This sequence belongs to the Ycf4 family.

It localises to the cellular thylakoid membrane. Functionally, seems to be required for the assembly of the photosystem I complex. The polypeptide is Photosystem I assembly protein Ycf4 (Prochlorococcus marinus (strain MIT 9215)).